The following is a 112-amino-acid chain: Phosphoribosyl-ATP pyrophosphatase (112 aa).

It belongs to the PRA-PH family.

It localises to the cytoplasm. It carries out the reaction 1-(5-phospho-beta-D-ribosyl)-ATP + H2O = 1-(5-phospho-beta-D-ribosyl)-5'-AMP + diphosphate + H(+). It functions in the pathway amino-acid biosynthesis; L-histidine biosynthesis; L-histidine from 5-phospho-alpha-D-ribose 1-diphosphate: step 2/9. The polypeptide is Phosphoribosyl-ATP pyrophosphatase (Chromohalobacter salexigens (strain ATCC BAA-138 / DSM 3043 / CIP 106854 / NCIMB 13768 / 1H11)).